A 799-amino-acid chain; its full sequence is RasGAP-activating-like protein 1 (799 aa).

2 C2 domains span residues 1-105 and 116-231; these read MAKS…DSWI and VQGE…NGWF. Ca(2+) contacts are provided by aspartate 21, aspartate 27, aspartate 74, aspartate 76, aspartate 82, aspartate 149, aspartate 155, aspartate 202, aspartate 204, and aspartate 210. A Ras-GAP domain is found at 316–544; the sequence is GLAGPFLDYL…SRVRDFLDQL (229 aa). Position 400 is a phosphothreonine (threonine 400). Positions 565 to 672 constitute a PH domain; it reads TIVREGFLLK…WLSALRKASA (108 aa). The Btk-type zinc-finger motif lies at 674–710; it reads NPGKLVACHPGAFRSGRWTCCLQAERSAAGCSRTHSA. Positions 682, 693, 694, and 704 each coordinate Zn(2+).

The cofactor is Ca(2+).

Probable inhibitory regulator of the Ras-cyclic AMP pathway. Plays a role in dendrite formation by melanocytes. The polypeptide is RasGAP-activating-like protein 1 (Mus musculus (Mouse)).